Consider the following 481-residue polypeptide: GTPase Der (481 aa).

2 EngA-type G domains span residues 47-210 (PVLA…PDVS) and 221-394 (RRVA…ESWE). Residues 53–60 (GRPNVGKS), 100–104 (DTGGW), 162–165 (NKVD), 227–234 (GRPNVGKS), 274–278 (DTAGI), and 339–342 (NKWD) each bind GTP. The KH-like domain maps to 395–477 (TRIPTGKFNA…PIVLNMRVRE (83 aa)).

It belongs to the TRAFAC class TrmE-Era-EngA-EngB-Septin-like GTPase superfamily. EngA (Der) GTPase family. Associates with the 50S ribosomal subunit.

Functionally, GTPase that plays an essential role in the late steps of ribosome biogenesis. The chain is GTPase Der from Leifsonia xyli subsp. xyli (strain CTCB07).